A 6668-amino-acid polypeptide reads, in one-letter code: Centrosome-associated protein CEP250 (6668 aa).

Coiled coils occupy residues 562-589 (KAFHEAQLARAREETKTLRQKIAALQQD), 632-666 (TRELTERLQAALAVNESLREELLEARQQLSLLRAS), 873-988 (HTEC…LRSS), 1042-1087 (LRMS…HEAA), 1252-1307 (VEDL…AVSR), 1333-1427 (LESL…LEKK), 1501-1538 (RPAAEEAVERETNLKKELEAAHQQKNEAEEMCKELGTQ), 1594-1688 (REAL…SEVA), 1896-1930 (HDILVGRVEELERMQTELEEQRRMLTKHLQQTTEK), 1975-2224 (EETL…AKQS), 2298-3272 (AEDE…LKME), 3298-3436 (QQEL…SRAE), 3526-3599 (LVQL…AKEE), 3697-3773 (CASL…EERR), 3856-4137 (TEML…VEAE), 4170-4486 (RRKL…LRER), 4515-5078 (LETL…FRRR), 5165-5202 (LASLGQELEEERWQVKQLQELLKEVDSARKEALEQETL), 5298-5731 (LREK…QHRV), and 5927-6119 (TQAL…LWRQ).

Post-translationally, proteolytically cleaved; only the full-length form localizes to the inner core, while processed version also localizes to the outer core during the onset of cell division.

It is found in the cytoplasm. Its subcellular location is the cytoskeleton. The protein resides in the microtubule organizing center. It localises to the centrosome. Functionally, part of the centrosome inner core complex. Required for the linking of centrosomal inner and outer cores. This chain is Centrosome-associated protein CEP250, found in Toxoplasma gondii (strain ATCC 50611 / Me49).